The chain runs to 301 residues: uncharacterized protein (301 aa).

Helical transmembrane passes span 1 to 21 (MSWI…LGIV), 33 to 53 (SVLF…YFYY), 72 to 92 (AMSL…KIPG), 101 to 121 (FGII…TILI), 124 to 144 (FAWL…KTFY), 185 to 205 (YFTP…VFAI), 220 to 240 (IIYT…FCLA), 246 to 266 (FSYI…KIFI), and 270 to 290 (IAIP…FGII).

Belongs to the TerC family.

It is found in the cell membrane. This is an uncharacterized protein from Rickettsia felis (strain ATCC VR-1525 / URRWXCal2) (Rickettsia azadi).